A 534-amino-acid polypeptide reads, in one-letter code: Alkaline serine exoprotease A (534 aa).

Positions 1-21 are cleaved as a signal peptide; that stretch reads MLKKLLSCCITSALCFHSSLA. Positions 22–141 are excised as a propeptide; the sequence is FSQPNEIADS…LSLDPIVSAD (120 aa). Residues 57 to 134 enclose the Inhibitor I9 domain; it reads RYIVVFQQPQ…YIEQDRILSL (78 aa). Positions 148-419 constitute a Peptidase S8 domain; sequence IWGLDRIDQR…KLLYSLTDAD (272 aa). Catalysis depends on charge relay system residues Asp180, His213, and Ser363. The disordered stretch occupies residues 423–442; sequence DCGGPDPTPDPEGKLTSGVP.

Belongs to the peptidase S8 family.

This chain is Alkaline serine exoprotease A (proA), found in Vibrio alginolyticus.